The following is a 1773-amino-acid chain: Plexin-2 (1773 aa).

The first 19 residues, 1–19 (MLFIESAFLVLTSLSAAEA), serve as a signal peptide directing secretion. Residues 20-436 (ATPFEGGVKQ…MPYGIVMEEL (417 aa)) enclose the Sema domain. The Extracellular segment spans residues 20–1130 (ATPFEGGVKQ…SDHALPSRLS (1111 aa)). N-linked (GlcNAc...) asparagine glycosylation occurs at asparagine 65. 9 cysteine pairs are disulfide-bonded: cysteine 83-cysteine 90, cysteine 117-cysteine 125, cysteine 239-cysteine 341, cysteine 255-cysteine 292, cysteine 310-cysteine 328, cysteine 439-cysteine 456, cysteine 445-cysteine 479, cysteine 448-cysteine 465, and cysteine 459-cysteine 471. N-linked (GlcNAc...) asparagine glycosylation occurs at asparagine 241. The region spanning 438-480 (TCAHHESCTDCQVSVDPLCQWCHPTQSCTTSSRCSGPLTTQCP) is the PSI 1 domain. An N-linked (GlcNAc...) asparagine glycan is attached at asparagine 494. A disulfide bond links cysteine 516 and cysteine 538. An N-linked (GlcNAc...) asparagine glycan is attached at asparagine 566. A PSI 2 domain is found at 571–608 (DCAGYSTCSTCMSSEFGCQWCSHKCSSSCGSASAKACV). Residues asparagine 670 and asparagine 693 are each glycosylated (N-linked (GlcNAc...) asparagine). The PSI 3 domain occupies 698-739 (SCSNLAADCSSCLALSPSLSCGWCNRKCSHECHESKATAVCD). IPT/TIG domains are found at residues 741 to 829 (PKID…FSFV), 831 to 916 (VSIF…FEYR), and 919 to 1006 (PSVN…FLMD). N-linked (GlcNAc...) asparagine glycans are attached at residues asparagine 855, asparagine 877, asparagine 975, and asparagine 1007. A helical transmembrane segment spans residues 1131 to 1151 (FLILGLLLFTVITLIVMCLIF). Positions 1150–1188 (IFKRRRQEREKEYRKIQLQMENLENNVRKECKQAFAELQ) form a coiled coil. Over 1152–1764 (KRRRQEREKE…LHVCLETDNH (613 aa)) the chain is Cytoplasmic.

The protein belongs to the plexin family. In terms of assembly, interacts with mab-20.

It is found in the cell membrane. Functionally, involved as a receptor for mab-20/sema-2a in the formation or stabilization of cell-cell contacts at several stages of epithelial morphogenesis. In early embryonic development, required for proper ventral closure of the epidermis. During male tail morphogenesis, involved in precursor cell sorting and in the formation of distinct sensory rays. Involved in axon guidance of SDQL neurons during neurogenesis. This is Plexin-2 (plx-2) from Caenorhabditis briggsae.